Consider the following 587-residue polypeptide: D-lactate dehydrogenase [cytochrome] 1, mitochondrial (587 aa).

An FAD-binding PCMH-type domain is found at 146–327 (SPEQRPRIIL…TEATVKCHVK (182 aa)).

It belongs to the FAD-binding oxidoreductase/transferase type 4 family. It depends on FAD as a cofactor.

The protein localises to the mitochondrion inner membrane. It carries out the reaction (R)-lactate + 2 Fe(III)-[cytochrome c] = 2 Fe(II)-[cytochrome c] + pyruvate + 2 H(+). Catalyzes the stereospecific oxidation of D-lactate to pyruvate. This chain is D-lactate dehydrogenase [cytochrome] 1, mitochondrial, found in Saccharomyces cerevisiae (strain ATCC 204508 / S288c) (Baker's yeast).